Consider the following 217-residue polypeptide: Proteasome subunit beta type-9 (217 aa).

Positions 1–18 (MLDESLEPGWLSEEVKTG) are cleaved as a propeptide — removed in mature form. Catalysis depends on Thr19, which acts as the Nucleophile.

It belongs to the peptidase T1B family. As to quaternary structure, the 26S proteasome consists of a 20S proteasome core and two 19S regulatory subunits. The 20S proteasome core is composed of 28 subunits that are arranged in four stacked rings, resulting in a barrel-shaped structure. The two end rings are each formed by seven alpha subunits, and the two central rings are each formed by seven beta subunits. The catalytic chamber with the active sites is on the inside of the barrel. Component of the immunoproteasome, where it displaces the equivalent housekeeping subunit PSMB6. Autocleaved. The resulting N-terminal Thr residue of the mature subunit is responsible for the nucleophile proteolytic activity.

It is found in the cytoplasm. It localises to the nucleus. The catalysed reaction is Cleavage of peptide bonds with very broad specificity.. In terms of biological role, the proteasome is a multicatalytic proteinase complex which is characterized by its ability to cleave peptides with Arg, Phe, Tyr, Leu, and Glu adjacent to the leaving group at neutral or slightly basic pH. The proteasome has an ATP-dependent proteolytic activity. This subunit is involved in antigen processing to generate class I binding peptides. This chain is Proteasome subunit beta type-9 (psmb9), found in Oncorhynchus mykiss (Rainbow trout).